Reading from the N-terminus, the 1846-residue chain is Brefeldin A-inhibited guanine nucleotide-exchange protein 1 (1846 aa).

The segment at 2 to 224 (YEGKKTKNMF…QEAKQMERER (223 aa)) is DCB; DCB:DCB domain and DCB:HUS domain interaction. The residue at position 52 (serine 52) is a Phosphoserine. 3 disordered regions span residues 216–249 (EAKQ…LRYL), 264–304 (DLEP…ATAA), and 347–410 (ISAS…SPGA). Residues 264-277 (DLEPQTHDVDKSLQ) show a composition bias toward basic and acidic residues. Phosphoserine is present on residues serine 286, serine 289, and serine 290. Polar residues-rich tracts occupy residues 348–357 (SASTEGNTGT) and 391–406 (SVSS…SSGP). 2 positions are modified to phosphoserine: serine 394 and serine 407. The HUS; DCB:HUS domain interaction stretch occupies residues 554–574 (ADAQSVVDIYVNYDCDLNAAN). Positions 631-684 (PNSQTTLGQEKPSEQEISEVKHPETINRYGSLNSLESTSSSGIGSYSTQMSGTD) are disordered. Residues 641-655 (KPSEQEISEVKHPET) show a composition bias toward basic and acidic residues. Positions 661 to 681 (SLNSLESTSSSGIGSYSTQMS) are enriched in low complexity. Residues 688–877 (QFEVLKQQKE…SAIYNEIAGK (190 aa)) enclose the SEC7 domain. Positions 708 to 712 (KKPKR) match the Nuclear localization signal (NLS) motif. Phosphoserine occurs at positions 1076, 1563, and 1566.

In terms of assembly, homodimer. Interacts with ARFGEF2/BIG2; both proteins are probably part of the same or very similar macromolecular complexes. Interacts with FKBP2. Interacts with MYO9B. Interacts with PRKAR1A and PRKAR2A. Interacts with PPP1CC. Interacts with NCL, FBL, NUP62 and U3 small nucleolar RNA. Interacts with DPY30. Interacts with PDE3A. Interacts with KANK1. Interacts with TBC1D22A and TBC1D22B. Phosphorylated. In vitro phosphorylated by PKA reducing its GEF activity and dephosphorylated by phosphatase PP1.

It localises to the cytoplasm. It is found in the perinuclear region. Its subcellular location is the golgi apparatus. The protein localises to the trans-Golgi network. The protein resides in the nucleus. It localises to the nucleolus. It is found in the nucleus matrix. Its subcellular location is the membrane. Its activity is regulated as follows. Inhibited by brefeldin A. In terms of biological role, promotes guanine-nucleotide exchange on ARF1 and ARF3. Promotes the activation of ARF1/ARF3 through replacement of GDP with GTP. Involved in vesicular trafficking. Required for the maintenance of Golgi structure; the function may be independent of its GEF activity. Required for the maturation of integrin beta-1 in the Golgi. Involved in the establishment and persistence of cell polarity during directed cell movement in wound healing. Proposed to act as A kinase-anchoring protein (AKAP) and may mediate crosstalk between Arf and PKA pathways. Inhibits GAP activity of MYO9B probably through competitive RhoA binding. The function in the nucleus remains to be determined. This chain is Brefeldin A-inhibited guanine nucleotide-exchange protein 1 (Arfgef1), found in Mus musculus (Mouse).